The primary structure comprises 37 residues: Photosystem II reaction center protein M (37 aa).

A helical membrane pass occupies residues 7-27; sequence GFIAVLMFLAIPTAFLLIPYV.

This sequence belongs to the PsbM family. As to quaternary structure, PSII is composed of 1 copy each of membrane proteins PsbA, PsbB, PsbC, PsbD, PsbE, PsbF, PsbH, PsbI, PsbJ, PsbK, PsbL, PsbM, PsbT, PsbX, PsbY, PsbZ, Psb30/Ycf12, at least 3 peripheral proteins of the oxygen-evolving complex and a large number of cofactors. It forms dimeric complexes.

Its subcellular location is the plastid. The protein localises to the chloroplast thylakoid membrane. One of the components of the core complex of photosystem II (PSII). PSII is a light-driven water:plastoquinone oxidoreductase that uses light energy to abstract electrons from H(2)O, generating O(2) and a proton gradient subsequently used for ATP formation. It consists of a core antenna complex that captures photons, and an electron transfer chain that converts photonic excitation into a charge separation. This subunit is found at the monomer-monomer interface. This chain is Photosystem II reaction center protein M, found in Pinus koraiensis (Korean pine).